Here is a 227-residue protein sequence, read N- to C-terminus: Cytochrome c oxidase subunit 2 (227 aa).

Residues Met-1–Ser-14 are Mitochondrial intermembrane-facing. Residues Pro-15–Met-45 form a helical membrane-spanning segment. Over Leu-46 to Gln-59 the chain is Mitochondrial matrix. Residues Glu-60–Met-87 traverse the membrane as a helical segment. Residues Asp-88 to Leu-227 lie on the Mitochondrial intermembrane side of the membrane. Residues His-161, Cys-196, Glu-198, Cys-200, His-204, and Met-207 each coordinate Cu cation. Glu-198 is a binding site for Mg(2+).

Belongs to the cytochrome c oxidase subunit 2 family. In terms of assembly, component of the cytochrome c oxidase (complex IV, CIV), a multisubunit enzyme composed of 14 subunits. The complex is composed of a catalytic core of 3 subunits MT-CO1, MT-CO2 and MT-CO3, encoded in the mitochondrial DNA, and 11 supernumerary subunits COX4I, COX5A, COX5B, COX6A, COX6B, COX6C, COX7A, COX7B, COX7C, COX8 and NDUFA4, which are encoded in the nuclear genome. The complex exists as a monomer or a dimer and forms supercomplexes (SCs) in the inner mitochondrial membrane with NADH-ubiquinone oxidoreductase (complex I, CI) and ubiquinol-cytochrome c oxidoreductase (cytochrome b-c1 complex, complex III, CIII), resulting in different assemblies (supercomplex SCI(1)III(2)IV(1) and megacomplex MCI(2)III(2)IV(2)). Found in a complex with TMEM177, COA6, COX18, COX20, SCO1 and SCO2. Interacts with TMEM177 in a COX20-dependent manner. Interacts with COX20. Interacts with COX16. Requires Cu cation as cofactor.

Its subcellular location is the mitochondrion inner membrane. The enzyme catalyses 4 Fe(II)-[cytochrome c] + O2 + 8 H(+)(in) = 4 Fe(III)-[cytochrome c] + 2 H2O + 4 H(+)(out). Component of the cytochrome c oxidase, the last enzyme in the mitochondrial electron transport chain which drives oxidative phosphorylation. The respiratory chain contains 3 multisubunit complexes succinate dehydrogenase (complex II, CII), ubiquinol-cytochrome c oxidoreductase (cytochrome b-c1 complex, complex III, CIII) and cytochrome c oxidase (complex IV, CIV), that cooperate to transfer electrons derived from NADH and succinate to molecular oxygen, creating an electrochemical gradient over the inner membrane that drives transmembrane transport and the ATP synthase. Cytochrome c oxidase is the component of the respiratory chain that catalyzes the reduction of oxygen to water. Electrons originating from reduced cytochrome c in the intermembrane space (IMS) are transferred via the dinuclear copper A center (CU(A)) of subunit 2 and heme A of subunit 1 to the active site in subunit 1, a binuclear center (BNC) formed by heme A3 and copper B (CU(B)). The BNC reduces molecular oxygen to 2 water molecules using 4 electrons from cytochrome c in the IMS and 4 protons from the mitochondrial matrix. The polypeptide is Cytochrome c oxidase subunit 2 (MT-CO2) (Balaenoptera physalus (Fin whale)).